Reading from the N-terminus, the 239-residue chain is Uridylate kinase (239 aa).

ATP is bound at residue lysine 10–glycine 13. Residues glycine 18 to glycine 23 form an involved in allosteric activation by GTP region. Residue glycine 52 coordinates UMP. ATP is bound by residues glycine 53 and arginine 57. Residues aspartate 73 and threonine 134–threonine 141 contribute to the UMP site. The ATP site is built by threonine 161, tyrosine 167, and aspartate 170.

It belongs to the UMP kinase family. Homohexamer.

Its subcellular location is the cytoplasm. The enzyme catalyses UMP + ATP = UDP + ADP. The protein operates within pyrimidine metabolism; CTP biosynthesis via de novo pathway; UDP from UMP (UMPK route): step 1/1. With respect to regulation, allosterically activated by GTP. Inhibited by UTP. Functionally, catalyzes the reversible phosphorylation of UMP to UDP. This chain is Uridylate kinase, found in Campylobacter jejuni subsp. jejuni serotype O:2 (strain ATCC 700819 / NCTC 11168).